A 278-amino-acid polypeptide reads, in one-letter code: Orotidine 5'-phosphate decarboxylase (278 aa).

Substrate contacts are provided by residues Asp40, 65 to 67 (KTH), 96 to 105 (DRKFIDIGNT), Tyr230, and Arg248. Lys98 functions as the Proton donor in the catalytic mechanism.

This sequence belongs to the OMP decarboxylase family.

It catalyses the reaction orotidine 5'-phosphate + H(+) = UMP + CO2. It functions in the pathway pyrimidine metabolism; UMP biosynthesis via de novo pathway; UMP from orotate: step 2/2. The protein is Orotidine 5'-phosphate decarboxylase (pyrG) of Penicillium chrysogenum (Penicillium notatum).